A 240-amino-acid chain; its full sequence is Small ribosomal subunit protein uS3 (240 aa).

The KH type-2 domain maps to 39 to 109 (IRQYVEKNLS…QIRINVVEVA (71 aa)). A disordered region spans residues 214 to 240 (EEQAPAQPATTPKRQRRRQQFEDRSNE).

Belongs to the universal ribosomal protein uS3 family. As to quaternary structure, part of the 30S ribosomal subunit. Forms a tight complex with proteins S10 and S14.

Functionally, binds the lower part of the 30S subunit head. Binds mRNA in the 70S ribosome, positioning it for translation. The polypeptide is Small ribosomal subunit protein uS3 (Gloeothece citriformis (strain PCC 7424) (Cyanothece sp. (strain PCC 7424))).